A 279-amino-acid chain; its full sequence is Ribosome maturation factor RimP (279 aa).

The disordered stretch occupies residues 197–279 (LAEEGEPEEQ…GAPALRPTPK (83 aa)). The segment covering 199–210 (EEGEPEEQEEGG) has biased composition (acidic residues).

This sequence belongs to the RimP family.

The protein resides in the cytoplasm. In terms of biological role, required for maturation of 30S ribosomal subunits. This Methylocella silvestris (strain DSM 15510 / CIP 108128 / LMG 27833 / NCIMB 13906 / BL2) protein is Ribosome maturation factor RimP.